Here is a 543-residue protein sequence, read N- to C-terminus: Phosphatidylinositol/phosphatidylcholine transfer protein SFH12 (543 aa).

The region spanning 120 to 294 is the CRAL-TRIO domain; that stretch reads EIDEVLKYYP…FLGGSCTCAD (175 aa). Residues 316 to 356 are disordered; the sequence is HNGDHKCSKGSQAENSGEKTIPEEDDSTTEPASEEEKASKE. Positions 490–526 form a coiled coil; that stretch reads DKEEMLNAAISRSNVLEQELAATKKALDDSLGRQEEL.

Belongs to the SFH family. Specifically expressed in flowers.

Its subcellular location is the golgi apparatus membrane. It is found in the cell membrane. Functionally, required for transport of secretory proteins from the Golgi complex. Catalyzes the transfer of phosphatidylinositol and phosphatidylcholine between membranes in vitro. This Arabidopsis thaliana (Mouse-ear cress) protein is Phosphatidylinositol/phosphatidylcholine transfer protein SFH12 (SFH12).